The following is an 82-amino-acid chain: Conotoxin C11GB (82 aa).

The signal sequence occupies residues 1–22 (MKLTCVMIVAVLFLTAWTVVTA). Residues 23-53 (EPHSSNVLENLYLKAHHEMENPEASKLNTRD) constitute a propeptide that is removed on maturation. Disulfide bonds link C55–C72, C62–C76, and C71–C80.

It belongs to the conotoxin O1 superfamily. In terms of tissue distribution, expressed by the venom duct.

The protein resides in the secreted. In Conus vexillum (Flag cone), this protein is Conotoxin C11GB.